The chain runs to 121 residues: Small ribosomal subunit protein bS6 (121 aa).

The tract at residues 94 to 121 (KAETGPSAVMKRVEKEEARKSSQQETAA) is disordered. The segment covering 104–115 (KRVEKEEARKSS) has biased composition (basic and acidic residues).

The protein belongs to the bacterial ribosomal protein bS6 family.

Binds together with bS18 to 16S ribosomal RNA. This Leptothrix cholodnii (strain ATCC 51168 / LMG 8142 / SP-6) (Leptothrix discophora (strain SP-6)) protein is Small ribosomal subunit protein bS6.